A 72-amino-acid chain; its full sequence is Translation initiation factor IF-1 (72 aa).

The S1-like domain maps to 1 to 72; the sequence is MSKEDMIEFS…TKGRITFRFK (72 aa).

This sequence belongs to the IF-1 family. Component of the 30S ribosomal translation pre-initiation complex which assembles on the 30S ribosome in the order IF-2 and IF-3, IF-1 and N-formylmethionyl-tRNA(fMet); mRNA recruitment can occur at any time during PIC assembly.

Its subcellular location is the cytoplasm. Its function is as follows. One of the essential components for the initiation of protein synthesis. Stabilizes the binding of IF-2 and IF-3 on the 30S subunit to which N-formylmethionyl-tRNA(fMet) subsequently binds. Helps modulate mRNA selection, yielding the 30S pre-initiation complex (PIC). Upon addition of the 50S ribosomal subunit IF-1, IF-2 and IF-3 are released leaving the mature 70S translation initiation complex. This chain is Translation initiation factor IF-1, found in Granulibacter bethesdensis (strain ATCC BAA-1260 / CGDNIH1).